The primary structure comprises 598 residues: Elongation factor 4 (598 aa).

Residues 5-187 (SHIRNFSIIA…RLVATIPAPI (183 aa)) form the tr-type G domain. GTP-binding positions include 17 to 22 (DHGKST) and 134 to 137 (NKID).

It belongs to the TRAFAC class translation factor GTPase superfamily. Classic translation factor GTPase family. LepA subfamily.

Its subcellular location is the cell inner membrane. It catalyses the reaction GTP + H2O = GDP + phosphate + H(+). Required for accurate and efficient protein synthesis under certain stress conditions. May act as a fidelity factor of the translation reaction, by catalyzing a one-codon backward translocation of tRNAs on improperly translocated ribosomes. Back-translocation proceeds from a post-translocation (POST) complex to a pre-translocation (PRE) complex, thus giving elongation factor G a second chance to translocate the tRNAs correctly. Binds to ribosomes in a GTP-dependent manner. The polypeptide is Elongation factor 4 (Pseudomonas fluorescens (strain Pf0-1)).